Here is a 251-residue protein sequence, read N- to C-terminus: MVDIQDFSTNLIENNQAIMIVGPKYTGKTTLIERLVNDLCARKEIKRIYWYKPMNSRSINYSEKNKFSSLVKLYNNYQNIFDEYSKKSIQKKLNKESNKESIIVLDDIRPHNIPTINIIKKLILDRKKNNVTIIFSLQNFGPYNGVVLPFDLYFSFDNFNYMSKKMFSCEFKKKFKTTYEYEFKMFTNKYSKTKYNSLVFDGHTLNLYQFNAVSAITEYPNKDTYFDLLDEFDIEIIEDTIKIPNKLVIEI.

This is an uncharacterized protein from Acanthamoeba polyphaga mimivirus (APMV).